The sequence spans 156 residues: Small ribosomal subunit protein uS7 (156 aa).

It belongs to the universal ribosomal protein uS7 family. In terms of assembly, part of the 30S ribosomal subunit. Contacts proteins S9 and S11.

Its function is as follows. One of the primary rRNA binding proteins, it binds directly to 16S rRNA where it nucleates assembly of the head domain of the 30S subunit. Is located at the subunit interface close to the decoding center, probably blocks exit of the E-site tRNA. The polypeptide is Small ribosomal subunit protein uS7 (Clostridium novyi (strain NT)).